The primary structure comprises 189 residues: Protein GrpE (189 aa).

Residues 1–24 (MADEQTVDTQNPEANQAPEASGDD) are disordered.

The protein belongs to the GrpE family. Homodimer.

The protein resides in the cytoplasm. Functionally, participates actively in the response to hyperosmotic and heat shock by preventing the aggregation of stress-denatured proteins, in association with DnaK and GrpE. It is the nucleotide exchange factor for DnaK and may function as a thermosensor. Unfolded proteins bind initially to DnaJ; upon interaction with the DnaJ-bound protein, DnaK hydrolyzes its bound ATP, resulting in the formation of a stable complex. GrpE releases ADP from DnaK; ATP binding to DnaK triggers the release of the substrate protein, thus completing the reaction cycle. Several rounds of ATP-dependent interactions between DnaJ, DnaK and GrpE are required for fully efficient folding. The sequence is that of Protein GrpE from Pseudomonas fluorescens (strain Pf0-1).